A 67-amino-acid chain; its full sequence is Toxin Cex8 (67 aa).

A signal peptide is located at residue Ala1. Positions 2–65 (KEGYLVNIYT…SYPYPEKSCG (64 aa)) constitute an LCN-type CS-alpha/beta domain. Disulfide bonds link Cys13-Cys64, Cys17-Cys40, Cys26-Cys45, and Cys30-Cys47. Cys64 bears the Cysteine amide mark. The propeptide occupies 65–67 (GRK).

This sequence belongs to the long (4 C-C) scorpion toxin superfamily. Sodium channel inhibitor family. Beta subfamily. In terms of tissue distribution, expressed by the venom gland.

The protein localises to the secreted. Functionally, beta toxins bind voltage-independently at site-4 of sodium channels (Nav) and shift the voltage of activation toward more negative potentials thereby affecting sodium channel activation and promoting spontaneous and repetitive firing. The protein is Toxin Cex8 of Centruroides exilicauda (Bark scorpion).